A 274-amino-acid polypeptide reads, in one-letter code: Large ribosomal subunit protein uL2 (274 aa).

The segment at 223-274 is disordered; it reads VVMNPVDHPHGGGEGRTSGGRHPVSPWGVPTKGFKTRKNKRTDKYIVRRRTK. Positions 256–274 are enriched in basic residues; it reads FKTRKNKRTDKYIVRRRTK.

Belongs to the universal ribosomal protein uL2 family. In terms of assembly, part of the 50S ribosomal subunit. Forms a bridge to the 30S subunit in the 70S ribosome.

One of the primary rRNA binding proteins. Required for association of the 30S and 50S subunits to form the 70S ribosome, for tRNA binding and peptide bond formation. It has been suggested to have peptidyltransferase activity; this is somewhat controversial. Makes several contacts with the 16S rRNA in the 70S ribosome. This is Large ribosomal subunit protein uL2 from Vibrio atlanticus (strain LGP32) (Vibrio splendidus (strain Mel32)).